A 478-amino-acid chain; its full sequence is Pyruvate kinase (478 aa).

Position 36 (R36) interacts with substrate. Residues N38, S40, and D70 each contribute to the K(+) site. 38 to 41 (NFSH) lines the ATP pocket. R77 and K160 together coordinate ATP. E225 lines the Mg(2+) pocket. Substrate is bound by residues G251, D252, and T284. D252 lines the Mg(2+) pocket.

It belongs to the pyruvate kinase family. As to quaternary structure, homotetramer. Mg(2+) serves as cofactor. The cofactor is K(+).

The enzyme catalyses pyruvate + ATP = phosphoenolpyruvate + ADP + H(+). It functions in the pathway carbohydrate degradation; glycolysis; pyruvate from D-glyceraldehyde 3-phosphate: step 5/5. Allosterically activated by AMP and by several sugar phosphates. Belongs to type II PK. In Haemophilus influenzae (strain ATCC 51907 / DSM 11121 / KW20 / Rd), this protein is Pyruvate kinase (pykA).